Consider the following 139-residue polypeptide: Small ribosomal subunit protein uS12m (139 aa).

Residues 1-21 (MLSTLYQNDLKKKRNRRRNRS) form a disordered region. The segment covering 11–20 (KKKRNRRRNR) has biased composition (basic residues).

This sequence belongs to the universal ribosomal protein uS12 family.

It localises to the mitochondrion. Protein S12 is involved in the translation initiation step. The chain is Small ribosomal subunit protein uS12m (RPS12) from Paramecium tetraurelia.